Here is a 341-residue protein sequence, read N- to C-terminus: S-adenosylmethionine:tRNA ribosyltransferase-isomerase (341 aa).

The protein belongs to the QueA family. As to quaternary structure, monomer.

Its subcellular location is the cytoplasm. The enzyme catalyses 7-aminomethyl-7-carbaguanosine(34) in tRNA + S-adenosyl-L-methionine = epoxyqueuosine(34) in tRNA + adenine + L-methionine + 2 H(+). It functions in the pathway tRNA modification; tRNA-queuosine biosynthesis. Transfers and isomerizes the ribose moiety from AdoMet to the 7-aminomethyl group of 7-deazaguanine (preQ1-tRNA) to give epoxyqueuosine (oQ-tRNA). This Clostridium botulinum (strain Okra / Type B1) protein is S-adenosylmethionine:tRNA ribosyltransferase-isomerase.